Reading from the N-terminus, the 219-residue chain is Ribose-5-phosphate isomerase A (219 aa).

Substrate contacts are provided by residues 28–31, 81–84, and 94–97; these read TGST, DGAD, and KGGG. Residue glutamate 103 is the Proton acceptor of the active site. Lysine 121 is a binding site for substrate.

The protein belongs to the ribose 5-phosphate isomerase family. Homodimer.

It catalyses the reaction aldehydo-D-ribose 5-phosphate = D-ribulose 5-phosphate. It participates in carbohydrate degradation; pentose phosphate pathway; D-ribose 5-phosphate from D-ribulose 5-phosphate (non-oxidative stage): step 1/1. Catalyzes the reversible conversion of ribose-5-phosphate to ribulose 5-phosphate. The chain is Ribose-5-phosphate isomerase A from Escherichia fergusonii (strain ATCC 35469 / DSM 13698 / CCUG 18766 / IAM 14443 / JCM 21226 / LMG 7866 / NBRC 102419 / NCTC 12128 / CDC 0568-73).